Reading from the N-terminus, the 206-residue chain is Thymidylate kinase (206 aa).

7–14 (GGEGSGKS) lines the ATP pocket.

This sequence belongs to the thymidylate kinase family.

It catalyses the reaction dTMP + ATP = dTDP + ADP. Its function is as follows. Phosphorylation of dTMP to form dTDP in both de novo and salvage pathways of dTTP synthesis. This Chlamydia pneumoniae (Chlamydophila pneumoniae) protein is Thymidylate kinase (tmk).